The chain runs to 310 residues: MADAAATAGAGGSGTRSGSKQSTNPADNYHLARRRTLQVVVSSLLTEAGFESAEKASVETLTEMLQSYISEIGRSAKSYCEHTARTQPTLSDIVVTLVEMGFNVDTLPAYAKRSQRMVITAPPVTNQPVTPKALTAGQNRPHPPHIPSHFPEFPDPHTYIKTPTYREPVSDYQVLREKAASQRRDVERALTRFMAKTGETQSLFKDDVSTFPLIAARPFTIPYLTALLPSELEMQQMEETDSSEQDEQTDTENLALHISMEDSGAEKENTSVLQQNPSLSGSRNGEENIIDNPYLRPVKKPKIRRKKSLS.

Residues M1 to H30 are disordered. Position 2 is an N-acetylalanine (A2). Residues R35–F102 enclose the Histone-fold; involved in forming hexamer structure in TFIID complex domain. T130 carries the post-translational modification Phosphothreonine. The segment at D262–S310 is disordered. Residues T270–R283 show a composition bias toward polar residues. Residue S271 is modified to Phosphoserine. The Nuclear localization signal motif lies at Y294–K307. Basic residues predominate over residues P297 to S310.

The protein belongs to the TAF8 family. In terms of assembly, component of the TFIID basal transcription factor complex, composed of TATA-box-binding protein TBP, and a number of TBP-associated factors (TAFs), including TAF1, TAF2, TAF3, TAF4, TAF5, TAF6, TAF7, TAF8, TAF9, TAF10, TAF11, TAF12 and TAF13. Interacts with TBP, TAF1, TAF6, TAF10, TAF11 and TAF13. Component also of a small TAF complex (SMAT) containing TAF8, TAF10 and SUPT7L. Forms a heterodimer with TAF10. Interaction with TAF10 is mediated mainly via its histone fold domain while interaction with SUPT7L is via its C-terminal region.

It localises to the nucleus. The protein resides in the cytoplasm. Functionally, the TFIID basal transcription factor complex plays a major role in the initiation of RNA polymerase II (Pol II)-dependent transcription. TFIID recognizes and binds promoters with or without a TATA box via its subunit TBP, a TATA-box-binding protein, and promotes assembly of the pre-initiation complex (PIC). The TFIID complex consists of TBP and TBP-associated factors (TAFs), including TAF1, TAF2, TAF3, TAF4, TAF5, TAF6, TAF7, TAF8, TAF9, TAF10, TAF11, TAF12 and TAF13. The TFIID complex structure can be divided into 3 modules TFIID-A, TFIID-B, and TFIID-C. TAF8 is involved in forming the TFIID-B module, together with TAF5. Mediates both basal and activator-dependent transcription. Plays a role in the differentiation of preadipocyte fibroblasts to adipocytes, however, does not seem to play a role in differentiation of myoblasts. Required for the integration of TAF10 in the TAF complex. May be important for survival of cells of the inner cell mass which constitute the pluripotent cell population of the early embryo. In Homo sapiens (Human), this protein is Transcription initiation factor TFIID subunit 8 (TAF8).